Consider the following 291-residue polypeptide: Transmembrane O-methyltransferase (291 aa).

Residues V31–V51 traverse the membrane as a helical segment. S-adenosyl-L-methionine is bound by residues E137, G139–T140, S145, E163, and S193.

Belongs to the class I-like SAM-binding methyltransferase superfamily. Cation-dependent O-methyltransferase family. As to quaternary structure, interacts with LHFPL5, PCDH15, TMC1, TMC2 and TMIE. Interacts directly with TMC1. The interaction of TOMT with TMC1 and TMC2 is required for the transportation of TMC1/2 into the stereocilia of hair cells.

The protein localises to the membrane. It localises to the cytoplasm. The protein resides in the endoplasmic reticulum. The enzyme catalyses a catechol + S-adenosyl-L-methionine = a guaiacol + S-adenosyl-L-homocysteine + H(+). In terms of biological role, catalyzes the O-methylation, and thereby the inactivation, of catecholamine neurotransmitters and catechol hormones. Required for auditory function. Component of the cochlear hair cell's mechanotransduction (MET) machinery. Involved in the assembly of the asymmetric tip-link MET complex. Required for transportation of TMC1 and TMC2 proteins into the mechanically sensitive stereocilia of the hair cells. The function in MET is independent of the enzymatic activity. The polypeptide is Transmembrane O-methyltransferase (Homo sapiens (Human)).